We begin with the raw amino-acid sequence, 63 residues long: Conotoxin PnMRCL-0111 (63 aa).

Positions 1-22 (MHCLSVFVILLLLTASAPSVDA) are cleaved as a signal peptide. The propeptide occupies 23–50 (QPKTEDDVPLSSFHDDLQRTVRTLLDIR). Trp-62 is subject to Tryptophan amide.

It belongs to the conotoxin T superfamily. In terms of processing, contains 2 disulfide bonds that can be either 'C1-C3, C2-C4' or 'C1-C4, C2-C3', since these disulfide connectivities have been observed for conotoxins with cysteine framework V (for examples, see AC P0DQQ7 and AC P81755). As to expression, expressed by the venom duct.

It localises to the secreted. The chain is Conotoxin PnMRCL-0111 from Conus pennaceus (Feathered cone).